A 2627-amino-acid polypeptide reads, in one-letter code: Telomerase protein component 1 (2627 aa).

TEP1 N-terminal repeat units follow at residues 1–30 (MEKLHGHVSAHPDILSLENRCLAMLPDLQP), 31–60 (LEKLHQHVSTHSDILSLKNQCLATLPDLKT), 61–90 (MEKPHGYVSAHPDILSLENQCLATLSDLKT), and 91–120 (MEKPHGHVSAHPDILSLENRCLATLSSLKS). Disordered stretches follow at residues 193–214 (FDSEEKKGAETQMPSYSLSLGE) and 383–402 (RKHRAKRHPRRPPRSPGMEP). The TROVE domain occupies 223–676 (VKLTSGDSES…VKHSLPLLPG (454 aa)). A compositionally biased stretch (basic residues) spans 383-395 (RKHRAKRHPRRPP). The 329-residue stretch at 1162-1490 (RLSLVTGQSG…PLERPGARLC (329 aa)) folds into the NACHT domain. 1168 to 1175 (GQSGQGKT) serves as a coordination point for ATP. WD repeat units lie at residues 1411–1448 (VLPQALTALEVTRSGLTVDQLHGVLSVWRTLPKGTKSW), 1674–1713 (AVSSSPTAVAFSTNGQRAAVGTANGTVYLLDLRTWQEEKS), 1716–1754 (SGCDGISACLFLSDDTLFLTAFDGLLELWDLQHGCRVLQ), 1757–1796 (AHQYQITGCCLSPDCRLLATVCLGGCLKLWDTVRGQLAFQ), 1798–1837 (TYPKSLNCVAFHPEGQVIATGSWAGSISFFQVDGLKVTKD), 1840–1879 (APGASIRTLAFNVPGGVVAVGRLDSMVELWAWREGARLAA), 1882–1921 (AHHGFVAAALFLHAGCQLLTAGEDGKVQVWSGSLGRPRGH), 1925–1964 (LSLSPALSVALSPDGDRVAVGYRADGIRIYKISSGSQGAQ), 1967–2005 (ALDVAVSALAWLSPKVLVSGAEDGSLQGWALKECSLQSL), 2008–2047 (LSRFQKPVLGLATSQELLASASEDFTVQLWPRQLLTRPHK), 2059–2098 (GHEGPVSCCSFSTDGGSLATGGRDRSLLCWDVRTPKTPVL), 2105–2143 (CHRDWVTGCAWTKDNLLISCSSDGSVGLWDPESGQRLGQ), 2146–2183 (GHQSAVSAVAAVEEHVVSVSRDGTLKVWDHQGVELTSI), 2185–2233 (AHSG…QTHT), 2236–2275 (GHSGPVRAAAVSETSGLMLTASEDGSVRLWQVPKEADDTC), 2278–2317 (RSSAAVTAVAWAPDGSMAVSGNQAGELILWQEAKAVATAQ), 2319–2355 (PGHIGALIWSSAHTFFVLSADEKISEWQVKLRKGSAP), 2368–2417 (EDLG…PMIL), and 2459–2500 (NPSR…GEWT). Over residues 2506–2522 (QKKANTPETQTPGTDPS) the composition is skewed to polar residues. Residues 2506-2551 (QKKANTPETQTPGTDPSTCRESDASMDSDASMDSEPTPHLKTRQRR) form a disordered region. 2 WD repeats span residues 2553 to 2590 (IHSGSVTALHVLPELLVTASKDRDVKLWERPSMQLLGL) and 2592 to 2626 (RCEGSVSCLEPWLGANSTLQLAVGDVQGNVYFLNW).

In terms of assembly, associated component of the telomerase holoenzyme complex. Component of the vault ribonucleoprotein particle, at least composed of MVP, PARP4 and one or more vault RNAs (vRNAs). Binds to VAULTRC1, VAULTRC2 and VAULTRC4/hvg4 vRNAs. Ubiquitous.

The protein localises to the nucleus. It is found in the chromosome. It localises to the telomere. In terms of biological role, component of the telomerase ribonucleoprotein complex that is essential for the replication of chromosome termini. Also a component of the ribonucleoprotein vaults particle, a multi-subunit structure involved in nucleo-cytoplasmic transport. Responsible for the localizing and stabilizing vault RNA (vRNA) association in the vault ribonucleoprotein particle. Binds to TERC. The sequence is that of Telomerase protein component 1 (TEP1) from Homo sapiens (Human).